A 117-amino-acid polypeptide reads, in one-letter code: Holo-[acyl-carrier-protein] synthase (117 aa).

Mg(2+) contacts are provided by Asp8 and Glu59.

The protein belongs to the P-Pant transferase superfamily. AcpS family. Mg(2+) is required as a cofactor.

It is found in the cytoplasm. It carries out the reaction apo-[ACP] + CoA = holo-[ACP] + adenosine 3',5'-bisphosphate + H(+). Transfers the 4'-phosphopantetheine moiety from coenzyme A to a Ser of acyl-carrier-protein. The polypeptide is Holo-[acyl-carrier-protein] synthase (Staphylococcus carnosus (strain TM300)).